The following is a 910-amino-acid chain: Protein translocase subunit SecA (910 aa).

ATP is bound by residues glutamine 87, 105–109, and aspartate 512; that span reads GEGKT. Composition is skewed to basic and acidic residues over residues 561–571, 841–853, and 880–890; these read RHESRRIDNQL, EEER…ELAR, and TFEREARKVGR. Disordered regions lie at residues 561 to 584 and 835 to 910; these read RHES…AGSS and EEVD…GKIN. Positions 894, 896, 905, and 906 each coordinate Zn(2+). Residues 900–910 show a composition bias toward basic residues; that stretch reads KKYKQCHGKIN.

Belongs to the SecA family. As to quaternary structure, monomer and homodimer. Part of the essential Sec protein translocation apparatus which comprises SecA, SecYEG and auxiliary proteins SecDF-YajC and YidC. Requires Zn(2+) as cofactor.

It localises to the cell inner membrane. The protein localises to the cytoplasm. The enzyme catalyses ATP + H2O + cellular proteinSide 1 = ADP + phosphate + cellular proteinSide 2.. Functionally, part of the Sec protein translocase complex. Interacts with the SecYEG preprotein conducting channel. Has a central role in coupling the hydrolysis of ATP to the transfer of proteins into and across the cell membrane, serving both as a receptor for the preprotein-SecB complex and as an ATP-driven molecular motor driving the stepwise translocation of polypeptide chains across the membrane. In Photobacterium profundum (strain SS9), this protein is Protein translocase subunit SecA.